Reading from the N-terminus, the 350-residue chain is tRNA N6-adenosine threonylcarbamoyltransferase (350 aa).

His-117 and His-121 together coordinate Fe cation. Substrate contacts are provided by residues 140 to 144 (LVSGG), Asp-173, Gly-186, and Asn-277. Position 305 (Asp-305) interacts with Fe cation.

This sequence belongs to the KAE1 / TsaD family. The cofactor is Fe(2+).

The protein localises to the cytoplasm. It carries out the reaction L-threonylcarbamoyladenylate + adenosine(37) in tRNA = N(6)-L-threonylcarbamoyladenosine(37) in tRNA + AMP + H(+). Functionally, required for the formation of a threonylcarbamoyl group on adenosine at position 37 (t(6)A37) in tRNAs that read codons beginning with adenine. Is involved in the transfer of the threonylcarbamoyl moiety of threonylcarbamoyl-AMP (TC-AMP) to the N6 group of A37, together with TsaE and TsaB. TsaD likely plays a direct catalytic role in this reaction. This is tRNA N6-adenosine threonylcarbamoyltransferase from Novosphingobium aromaticivorans (strain ATCC 700278 / DSM 12444 / CCUG 56034 / CIP 105152 / NBRC 16084 / F199).